Reading from the N-terminus, the 392-residue chain is NADH-quinone oxidoreductase subunit D (392 aa).

The protein belongs to the complex I 49 kDa subunit family. NDH-1 is composed of 14 different subunits. Subunits NuoB, C, D, E, F, and G constitute the peripheral sector of the complex.

Its subcellular location is the cell inner membrane. The catalysed reaction is a quinone + NADH + 5 H(+)(in) = a quinol + NAD(+) + 4 H(+)(out). In terms of biological role, NDH-1 shuttles electrons from NADH, via FMN and iron-sulfur (Fe-S) centers, to quinones in the respiratory chain. The immediate electron acceptor for the enzyme in this species is believed to be ubiquinone. Couples the redox reaction to proton translocation (for every two electrons transferred, four hydrogen ions are translocated across the cytoplasmic membrane), and thus conserves the redox energy in a proton gradient. The chain is NADH-quinone oxidoreductase subunit D from Rhodospirillum rubrum (strain ATCC 11170 / ATH 1.1.1 / DSM 467 / LMG 4362 / NCIMB 8255 / S1).